We begin with the raw amino-acid sequence, 117 residues long: Ig lambda-1 chain V region (117 aa).

An N-terminal signal peptide occupies residues 1 to 20 (MAWISLILSLLALSSGGAIS). Glutamine 21 carries the pyrrolidone carboxylic acid modification. Residues 21–117 (QAVVTQESAL…YFCALWYSNH (97 aa)) enclose the Ig-like domain.

The protein is Ig lambda-1 chain V region of Mus musculus (Mouse).